The chain runs to 371 residues: Protein maelstrom 1 (371 aa).

Residues 2-68 (AQNKPNAFMA…VLERESKTER (67 aa)) constitute a DNA-binding region (HMG box).

It belongs to the maelstrom family.

The protein resides in the cytoplasm. It localises to the nucleus. In terms of biological role, involved both in the piRNA and miRNA metabolic processes. As a component of the meiotic nuage, plays a central role during oogenesis by repressing transposable elements and preventing their mobilization, which is essential for the germline integrity. Repression of transposable elements is mediated via the piRNA metabolic process, which mediates the repression of transposable elements during meiosis by forming complexes composed of piRNAs and Piwi proteins and governs the repression of transposons. As a nuclear component, it is required for proper differentiation in the germline stem cell (GSC) lineage by repressing microRNA-7 (miR-7), thereby acting as an indirect regulator of bag-of-marbles (Bam). Acts by binding to the promoter of miR-7 gene and repressing its expression; miR-7 repression alleviates the Bam repression by miR-7, thereby allowing differentiation in the germline stem cell (GSC) lineage. The polypeptide is Protein maelstrom 1 (mael1) (Drosophila pseudoobscura pseudoobscura (Fruit fly)).